The chain runs to 77 residues: Translation initiation factor IF-1, chloroplastic (77 aa).

The S1-like domain maps to 1 to 72 (MNKQGLFQME…TKGRIVYRQR (72 aa)).

Belongs to the IF-1 family. In terms of assembly, component of the 30S ribosomal translation pre-initiation complex which assembles on the 30S ribosome in the order IF-2 and IF-3, IF-1 and N-formylmethionyl-tRNA(fMet); mRNA recruitment can occur at any time during PIC assembly.

It localises to the plastid. It is found in the chloroplast. Its function is as follows. One of the essential components for the initiation of protein synthesis. Stabilizes the binding of IF-2 and IF-3 on the 30S subunit to which N-formylmethionyl-tRNA(fMet) subsequently binds. Helps modulate mRNA selection, yielding the 30S pre-initiation complex (PIC). Upon addition of the 50S ribosomal subunit IF-1, IF-2 and IF-3 are released leaving the mature 70S translation initiation complex. In Nephroselmis olivacea (Green alga), this protein is Translation initiation factor IF-1, chloroplastic.